The sequence spans 333 residues: NADH-quinone oxidoreductase subunit H (333 aa).

The next 8 helical transmembrane spans lie at 15-35, 88-108, 117-137, 159-179, 191-211, 239-259, 274-296, and 313-333; these read FFIF…FVTY, FILA…VIPF, IGVG…GVVT, ISYE…AGSL, VWYI…AVAE, WAFF…LITV, IPGA…WFRV, and VLLP…ELFF.

It belongs to the complex I subunit 1 family. As to quaternary structure, NDH-1 is composed of 14 different subunits. Subunits NuoA, H, J, K, L, M, N constitute the membrane sector of the complex.

It localises to the cell membrane. The enzyme catalyses a quinone + NADH + 5 H(+)(in) = a quinol + NAD(+) + 4 H(+)(out). Its function is as follows. NDH-1 shuttles electrons from NADH, via FMN and iron-sulfur (Fe-S) centers, to quinones in the respiratory chain. The immediate electron acceptor for the enzyme in this species is believed to be ubiquinone. Couples the redox reaction to proton translocation (for every two electrons transferred, four hydrogen ions are translocated across the cytoplasmic membrane), and thus conserves the redox energy in a proton gradient. This subunit may bind ubiquinone. The polypeptide is NADH-quinone oxidoreductase subunit H (Bacillus anthracis (strain A0248)).